A 1155-amino-acid chain; its full sequence is DNA-directed RNA polymerase subunit beta (1155 aa).

Belongs to the RNA polymerase beta chain family. The RNAP catalytic core consists of 2 alpha, 1 beta, 1 beta' and 1 omega subunit. When a sigma factor is associated with the core the holoenzyme is formed, which can initiate transcription.

The enzyme catalyses RNA(n) + a ribonucleoside 5'-triphosphate = RNA(n+1) + diphosphate. DNA-dependent RNA polymerase catalyzes the transcription of DNA into RNA using the four ribonucleoside triphosphates as substrates. This is DNA-directed RNA polymerase subunit beta from Borrelia recurrentis (strain A1).